The following is a 99-amino-acid chain: Large ribosomal subunit protein uL23 (99 aa).

This sequence belongs to the universal ribosomal protein uL23 family. As to quaternary structure, part of the 50S ribosomal subunit. Contacts protein L29, and trigger factor when it is bound to the ribosome.

One of the early assembly proteins it binds 23S rRNA. One of the proteins that surrounds the polypeptide exit tunnel on the outside of the ribosome. Forms the main docking site for trigger factor binding to the ribosome. This Synechococcus sp. (strain JA-2-3B'a(2-13)) (Cyanobacteria bacterium Yellowstone B-Prime) protein is Large ribosomal subunit protein uL23.